The following is a 179-amino-acid chain: Large ribosomal subunit protein uL5 (179 aa).

Belongs to the universal ribosomal protein uL5 family. Part of the 50S ribosomal subunit; part of the 5S rRNA/L5/L18/L25 subcomplex. Contacts the 5S rRNA and the P site tRNA. Forms a bridge to the 30S subunit in the 70S ribosome.

Functionally, this is one of the proteins that bind and probably mediate the attachment of the 5S RNA into the large ribosomal subunit, where it forms part of the central protuberance. In the 70S ribosome it contacts protein S13 of the 30S subunit (bridge B1b), connecting the 2 subunits; this bridge is implicated in subunit movement. Contacts the P site tRNA; the 5S rRNA and some of its associated proteins might help stabilize positioning of ribosome-bound tRNAs. This chain is Large ribosomal subunit protein uL5, found in Prochlorococcus marinus (strain MIT 9301).